The primary structure comprises 147 residues: D-aminoacyl-tRNA deacylase (147 aa).

The Gly-cisPro motif, important for rejection of L-amino acids signature appears at 137-138; sequence GP.

Belongs to the DTD family. Homodimer.

The protein localises to the cytoplasm. The enzyme catalyses glycyl-tRNA(Ala) + H2O = tRNA(Ala) + glycine + H(+). It catalyses the reaction a D-aminoacyl-tRNA + H2O = a tRNA + a D-alpha-amino acid + H(+). Its function is as follows. An aminoacyl-tRNA editing enzyme that deacylates mischarged D-aminoacyl-tRNAs. Also deacylates mischarged glycyl-tRNA(Ala), protecting cells against glycine mischarging by AlaRS. Acts via tRNA-based rather than protein-based catalysis; rejects L-amino acids rather than detecting D-amino acids in the active site. By recycling D-aminoacyl-tRNA to D-amino acids and free tRNA molecules, this enzyme counteracts the toxicity associated with the formation of D-aminoacyl-tRNA entities in vivo and helps enforce protein L-homochirality. Upon expression in B.subtilis strain 168 confers resistance to D-Tyr and D-Asp, suggesting it acts on both of these amino acids. The polypeptide is D-aminoacyl-tRNA deacylase (Bacillus amyloliquefaciens (Bacillus velezensis)).